Here is a 187-residue protein sequence, read N- to C-terminus: uncharacterized protein (187 aa).

This is an uncharacterized protein from Dictyostelium discoideum (Social amoeba).